The chain runs to 353 residues: Photosystem II D2 protein (353 aa).

Threonine 2 carries the N-acetylthreonine modification. The residue at position 2 (threonine 2) is a Phosphothreonine. Residues 41–61 (CAYFALGGWFTGTTFVTSWYT) traverse the membrane as a helical segment. Position 118 (histidine 118) interacts with chlorophyll a. Residues 125–141 (GFMLRQFELARSVQLRP) form a helical membrane-spanning segment. Glutamine 130 and asparagine 143 together coordinate pheophytin a. The helical transmembrane segment at 153–166 (VFVSVFLIYPLGQS) threads the bilayer. Histidine 198 serves as a coordination point for chlorophyll a. Residues 208 to 228 (AALLCAIHGATVENTLFEDGD) form a helical membrane-spanning segment. Residues histidine 215 and phenylalanine 262 each coordinate a plastoquinone. Fe cation is bound at residue histidine 215. Histidine 269 serves as a coordination point for Fe cation. A helical transmembrane segment spans residues 279-295 (GLWMSALGVVGLALNLR).

This sequence belongs to the reaction center PufL/M/PsbA/D family. In terms of assembly, PSII is composed of 1 copy each of membrane proteins PsbA, PsbB, PsbC, PsbD, PsbE, PsbF, PsbH, PsbI, PsbJ, PsbK, PsbL, PsbM, PsbT, PsbX, PsbY, PsbZ, Psb30/Ycf12, at least 3 peripheral proteins of the oxygen-evolving complex and a large number of cofactors. It forms dimeric complexes. The cofactor is The D1/D2 heterodimer binds P680, chlorophylls that are the primary electron donor of PSII, and subsequent electron acceptors. It shares a non-heme iron and each subunit binds pheophytin, quinone, additional chlorophylls, carotenoids and lipids. There is also a Cl(-1) ion associated with D1 and D2, which is required for oxygen evolution. The PSII complex binds additional chlorophylls, carotenoids and specific lipids..

It localises to the plastid. The protein localises to the chloroplast thylakoid membrane. It catalyses the reaction 2 a plastoquinone + 4 hnu + 2 H2O = 2 a plastoquinol + O2. Photosystem II (PSII) is a light-driven water:plastoquinone oxidoreductase that uses light energy to abstract electrons from H(2)O, generating O(2) and a proton gradient subsequently used for ATP formation. It consists of a core antenna complex that captures photons, and an electron transfer chain that converts photonic excitation into a charge separation. The D1/D2 (PsbA/PsbD) reaction center heterodimer binds P680, the primary electron donor of PSII as well as several subsequent electron acceptors. D2 is needed for assembly of a stable PSII complex. The chain is Photosystem II D2 protein from Amborella trichopoda.